A 586-amino-acid chain; its full sequence is uncharacterized protein (586 aa).

Positions 1 to 115 (MRVLVAETGR…NTEKLAGRDD (115 aa)) are disordered. Residues 8 to 20 (TGREDNVSVHSRE) show a composition bias toward basic and acidic residues. Over residues 21 to 31 (VSVNGSDSGTG) the composition is skewed to polar residues. Positions 35–44 (YKLETDDEHP) are enriched in basic and acidic residues. The span at 76 to 107 (TGMNTEYNDDNSSLVNTPRDSTTYAETNSPNT) shows a compositional bias: polar residues. 6 WD repeats span residues 184-223 (QFKE…ERRE), 253-291 (GHNA…SLAV), 293-333 (RHNE…ILHW), 335-374 (ELEY…YVSS), 387-430 (CRVT…LVLK), and 432-474 (SDAH…LINA).

Its subcellular location is the cytoplasm. The protein localises to the nucleus. This is an uncharacterized protein from Schizosaccharomyces pombe (strain 972 / ATCC 24843) (Fission yeast).